We begin with the raw amino-acid sequence, 122 residues long: Large ribosomal subunit protein uL14 (122 aa).

It belongs to the universal ribosomal protein uL14 family. Part of the 50S ribosomal subunit. Forms a cluster with proteins L3 and L19. In the 70S ribosome, L14 and L19 interact and together make contacts with the 16S rRNA in bridges B5 and B8.

Functionally, binds to 23S rRNA. Forms part of two intersubunit bridges in the 70S ribosome. This Beutenbergia cavernae (strain ATCC BAA-8 / DSM 12333 / CCUG 43141 / JCM 11478 / NBRC 16432 / NCIMB 13614 / HKI 0122) protein is Large ribosomal subunit protein uL14.